The primary structure comprises 385 residues: Succinate--CoA ligase [ADP-forming] subunit beta (385 aa).

The 229-residue stretch at 9 to 237 (KEILRQFGVN…LEAEHPLEIE (229 aa)) folds into the ATP-grasp domain. ATP-binding positions include lysine 45, 52–54 (GRG), valine 94, and glutamate 101. Residues asparagine 192 and aspartate 206 each coordinate Mg(2+). Residues asparagine 257 and 314–316 (GIT) contribute to the substrate site.

Belongs to the succinate/malate CoA ligase beta subunit family. In terms of assembly, heterotetramer of two alpha and two beta subunits. The cofactor is Mg(2+).

It carries out the reaction succinate + ATP + CoA = succinyl-CoA + ADP + phosphate. The catalysed reaction is GTP + succinate + CoA = succinyl-CoA + GDP + phosphate. It functions in the pathway carbohydrate metabolism; tricarboxylic acid cycle; succinate from succinyl-CoA (ligase route): step 1/1. Succinyl-CoA synthetase functions in the citric acid cycle (TCA), coupling the hydrolysis of succinyl-CoA to the synthesis of either ATP or GTP and thus represents the only step of substrate-level phosphorylation in the TCA. The beta subunit provides nucleotide specificity of the enzyme and binds the substrate succinate, while the binding sites for coenzyme A and phosphate are found in the alpha subunit. The polypeptide is Succinate--CoA ligase [ADP-forming] subunit beta (Deinococcus deserti (strain DSM 17065 / CIP 109153 / LMG 22923 / VCD115)).